Consider the following 229-residue polypeptide: DNA mismatch repair protein MutH (229 aa).

Belongs to the MutH family.

The protein localises to the cytoplasm. Functionally, sequence-specific endonuclease that cleaves unmethylated GATC sequences. It is involved in DNA mismatch repair. The sequence is that of DNA mismatch repair protein MutH from Escherichia coli O127:H6 (strain E2348/69 / EPEC).